The sequence spans 176 residues: DELTA-stichotoxin-She4a (176 aa).

Residues 2-11 are plays an important role in the hemolytic activity; the sequence is ELAGTIIDGA. An N-terminal region region spans residues 10 to 29; sequence GASLTFEVLDKVLGELGKVS. Phosphocholine is bound by residues S53, V86, S104, P106, Y132, Y136, and Y137. Residues 104-119 form a trp-rich region, which is important for the binding to lipid membrane region; sequence SVPFDYNWYSNWWDVK. Residues 142 to 144 carry the Cell attachment site motif; that stretch reads RGD.

In terms of assembly, octamer or nonamer in membranes. Monomer in the soluble state.

The protein resides in the secreted. The protein localises to the nematocyst. It localises to the target cell membrane. Pore-forming protein that forms cations-selective hydrophilic pores of around 1 nm and causes cardiac stimulation and cytolysis. Pore formation is a multi-step process that involves specific recognition of membrane sphingomyelin (but neither cholesterol nor phosphatidylcholine) using aromatic rich region and adjacent phosphocholine (POC) binding site, firm binding to the membrane (mainly driven by hydrophobic interactions) accompanied by the transfer of the N-terminal region to the lipid-water interface and finally pore formation after oligomerization of monomers. Cytolytic effects include red blood cells hemolysis, platelet aggregation and lysis, cytotoxic and cytostatic effects on fibroblasts. Lethality in mammals has been ascribed to severe vasospasm of coronary vessels, cardiac arrhythmia, and inotropic effects. This is DELTA-stichotoxin-She4a from Stichodactyla helianthus (Sun anemone).